The following is a 321-amino-acid chain: Putative sulfotransferase vep-2 (321 aa).

A helical transmembrane segment spans residues 11-31; sequence IARVLIIIASISVICITLFIS.

It to C.elegans C41C4.1 and C18B2.2.

It localises to the membrane. In Caenorhabditis elegans, this protein is Putative sulfotransferase vep-2.